Here is a 438-residue protein sequence, read N- to C-terminus: Thymidine phosphorylase (438 aa).

It belongs to the thymidine/pyrimidine-nucleoside phosphorylase family. Homodimer.

The enzyme catalyses thymidine + phosphate = 2-deoxy-alpha-D-ribose 1-phosphate + thymine. The protein operates within pyrimidine metabolism; dTMP biosynthesis via salvage pathway; dTMP from thymine: step 1/2. Its function is as follows. The enzymes which catalyze the reversible phosphorolysis of pyrimidine nucleosides are involved in the degradation of these compounds and in their utilization as carbon and energy sources, or in the rescue of pyrimidine bases for nucleotide synthesis. The sequence is that of Thymidine phosphorylase from Burkholderia cenocepacia (strain ATCC BAA-245 / DSM 16553 / LMG 16656 / NCTC 13227 / J2315 / CF5610) (Burkholderia cepacia (strain J2315)).